We begin with the raw amino-acid sequence, 226 residues long: Pyridoxal 5'-phosphate synthase subunit Pdx2 (226 aa).

52–54 (GES) contributes to the L-glutamine binding site. The Nucleophile role is filled by Cys87. L-glutamine contacts are provided by residues Arg124 and 156-157 (IR). Active-site charge relay system residues include His199 and Glu201.

This sequence belongs to the glutaminase PdxT/SNO family. In the presence of PdxS, forms a dodecamer of heterodimers. Only shows activity in the heterodimer.

It catalyses the reaction aldehydo-D-ribose 5-phosphate + D-glyceraldehyde 3-phosphate + L-glutamine = pyridoxal 5'-phosphate + L-glutamate + phosphate + 3 H2O + H(+). The catalysed reaction is L-glutamine + H2O = L-glutamate + NH4(+). The protein operates within cofactor biosynthesis; pyridoxal 5'-phosphate biosynthesis. In terms of biological role, catalyzes the hydrolysis of glutamine to glutamate and ammonia as part of the biosynthesis of pyridoxal 5'-phosphate. The resulting ammonia molecule is channeled to the active site of PdxS. This Plasmodium berghei protein is Pyridoxal 5'-phosphate synthase subunit Pdx2.